Reading from the N-terminus, the 443-residue chain is ATP-dependent protease ATPase subunit HslU (443 aa).

Residues isoleucine 18, 60–65 (GVGKTE), aspartate 256, glutamate 321, and arginine 393 each bind ATP.

The protein belongs to the ClpX chaperone family. HslU subfamily. A double ring-shaped homohexamer of HslV is capped on each side by a ring-shaped HslU homohexamer. The assembly of the HslU/HslV complex is dependent on binding of ATP.

The protein localises to the cytoplasm. In terms of biological role, ATPase subunit of a proteasome-like degradation complex; this subunit has chaperone activity. The binding of ATP and its subsequent hydrolysis by HslU are essential for unfolding of protein substrates subsequently hydrolyzed by HslV. HslU recognizes the N-terminal part of its protein substrates and unfolds these before they are guided to HslV for hydrolysis. This chain is ATP-dependent protease ATPase subunit HslU, found in Tolumonas auensis (strain DSM 9187 / NBRC 110442 / TA 4).